Here is a 555-residue protein sequence, read N- to C-terminus: MASSNTYSNFKLATELPAWSKLQKLYDAQGKSLNVKEEFQKDSARYNKYAKTLTNYDGSKILFDFSKNLINDEILATLIELAKEAKVTDLRDAMFAGEHINFTEDRAVYHVALRNRANKPMKVDGVDVAPEVDAVLQHMKEFSEQVRSGEWKGYTGKKITDVVNIGIGGSDLGPVMVTEALKHYAGVLDVHFVSNIDGTHIAEVLKVVDPETTLFLVASKTFTTAETITNANTAKNWFLSKTGNDQSNIAKHFAALSTNETEVAKFGIDTKNMFGFENWVGGRYSVWSAIGLSVALYIGFDNFEAFLKGAEAVDKHFVETPLEDNIPLLGGLLSVWYNNFFGAQTHLVAPFDQYLHRFPAYLQQLSMESNGKSVTRGNVFSTYSTGSILFGEPATNAQHSFFQLVHQGTKLIPSDFILAAQSHNPIENNLHQKMLASNFFAQAEALMVGKDEAQVKSEGATGGLVPHKIFSGNRPTTSILAQKITPAALGSLIAYYEHVTFTEGAIWNINSFDQWGVELGKVLAKVIGKELDNTEKITAHDASTNGLINQFKEWL.

D-glucose 6-phosphate contacts are provided by residues 169-170 (GS), 219-224 (SKTFTT), Gln364, Glu368, His399, and Lys521. Glu368 (proton donor) is an active-site residue. Active-site residues include His399 and Lys521.

This sequence belongs to the GPI family. Homodimer.

The protein localises to the cytoplasm. Its subcellular location is the cytosol. It catalyses the reaction alpha-D-glucose 6-phosphate = beta-D-fructose 6-phosphate. It participates in carbohydrate degradation; glycolysis; D-glyceraldehyde 3-phosphate and glycerone phosphate from D-glucose: step 2/4. Its function is as follows. In the cytoplasm, catalyzes the conversion of glucose-6-phosphate to fructose-6-phosphate, the second step in glycolysis, and the reverse reaction during gluconeogenesis. This chain is Glucose-6-phosphate isomerase (PGI1), found in Candida glabrata (strain ATCC 2001 / BCRC 20586 / JCM 3761 / NBRC 0622 / NRRL Y-65 / CBS 138) (Yeast).